The following is a 295-amino-acid chain: Chromatin modification-related protein YNG2 (295 aa).

The disordered stretch occupies residues 151–208 (NGTAGSGSSSGRKRPASSSSANGKGQKRKQQKKERSRSHQRAGTVSRDVSPNAGIGRD). Over residues 156–171 (SGSSSGRKRPASSSSA) the composition is skewed to low complexity. A compositionally biased stretch (basic residues) spans 175–190 (GQKRKQQKKERSRSHQ). The PHD-type zinc finger occupies 233-282 (QLYCFCQRVSYGEMVACDGPNCKYEWFHYSCVNLTEPPKGQWYCPECRLE). Zn(2+)-binding residues include cysteine 236, cysteine 238, cysteine 249, cysteine 254, histidine 260, cysteine 263, cysteine 276, and cysteine 279.

It belongs to the ING family. As to quaternary structure, interacts with H3K4me3 and to a lesser extent with H3K4me2. Component of the NuA4 histone acetyltransferase complex.

It localises to the nucleus. Component of the NuA4 histone acetyltransferase complex which is involved in transcriptional activation of selected genes principally by acetylation of nucleosomal histone H4 and H2A. The NuA4 complex is also involved in DNA repair. Involved in cell cycle progression and meiosis. This is Chromatin modification-related protein YNG2 (YNG2) from Kluyveromyces lactis (strain ATCC 8585 / CBS 2359 / DSM 70799 / NBRC 1267 / NRRL Y-1140 / WM37) (Yeast).